The sequence spans 601 residues: Phosphomethylpyrimidine synthase (601 aa).

Substrate-binding positions include N224, M253, Y282, H318, 338–340 (SRG), 379–382 (DGLR), and E418. Residue H422 coordinates Zn(2+). Y445 is a substrate binding site. A Zn(2+)-binding site is contributed by H486. [4Fe-4S] cluster-binding residues include C566, C569, and C574.

Belongs to the ThiC family. Homodimer. Requires [4Fe-4S] cluster as cofactor.

The enzyme catalyses 5-amino-1-(5-phospho-beta-D-ribosyl)imidazole + S-adenosyl-L-methionine = 4-amino-2-methyl-5-(phosphooxymethyl)pyrimidine + CO + 5'-deoxyadenosine + formate + L-methionine + 3 H(+). Its pathway is cofactor biosynthesis; thiamine diphosphate biosynthesis. In terms of biological role, catalyzes the synthesis of the hydroxymethylpyrimidine phosphate (HMP-P) moiety of thiamine from aminoimidazole ribotide (AIR) in a radical S-adenosyl-L-methionine (SAM)-dependent reaction. The chain is Phosphomethylpyrimidine synthase from Xylella fastidiosa (strain 9a5c).